Here is a 103-residue protein sequence, read N- to C-terminus: Urease subunit beta (103 aa).

The protein belongs to the urease beta subunit family. As to quaternary structure, heterotrimer of UreA (gamma), UreB (beta) and UreC (alpha) subunits. Three heterotrimers associate to form the active enzyme.

It localises to the cytoplasm. The catalysed reaction is urea + 2 H2O + H(+) = hydrogencarbonate + 2 NH4(+). The protein operates within nitrogen metabolism; urea degradation; CO(2) and NH(3) from urea (urease route): step 1/1. This chain is Urease subunit beta, found in Mycobacterium marinum (strain ATCC BAA-535 / M).